A 503-amino-acid polypeptide reads, in one-letter code: 3-octaprenyl-4-hydroxybenzoate carboxy-lyase (503 aa).

Asparagine 176 serves as a coordination point for Mn(2+). Residues 179–181 (IYR), 193–195 (RWL), and 198–199 (RG) contribute to the prenylated FMN site. A Mn(2+)-binding site is contributed by glutamate 242. The active-site Proton donor is the aspartate 303.

This sequence belongs to the UbiD family. Homohexamer. The cofactor is prenylated FMN. Mn(2+) serves as cofactor.

Its subcellular location is the cell membrane. It carries out the reaction a 4-hydroxy-3-(all-trans-polyprenyl)benzoate + H(+) = a 2-(all-trans-polyprenyl)phenol + CO2. Its pathway is cofactor biosynthesis; ubiquinone biosynthesis. Catalyzes the decarboxylation of 3-octaprenyl-4-hydroxy benzoate to 2-octaprenylphenol, an intermediate step in ubiquinone biosynthesis. The protein is 3-octaprenyl-4-hydroxybenzoate carboxy-lyase of Ralstonia nicotianae (strain ATCC BAA-1114 / GMI1000) (Ralstonia solanacearum).